A 426-amino-acid polypeptide reads, in one-letter code: Serine--tRNA ligase (426 aa).

233–235 (TSE) serves as a coordination point for L-serine. 264 to 266 (RAE) lines the ATP pocket. Glu-287 serves as a coordination point for L-serine. An ATP-binding site is contributed by 351–354 (EISS). L-serine is bound at residue Ser-387.

The protein belongs to the class-II aminoacyl-tRNA synthetase family. Type-1 seryl-tRNA synthetase subfamily. As to quaternary structure, homodimer. The tRNA molecule binds across the dimer.

It is found in the cytoplasm. It catalyses the reaction tRNA(Ser) + L-serine + ATP = L-seryl-tRNA(Ser) + AMP + diphosphate + H(+). The enzyme catalyses tRNA(Sec) + L-serine + ATP = L-seryl-tRNA(Sec) + AMP + diphosphate + H(+). Its pathway is aminoacyl-tRNA biosynthesis; selenocysteinyl-tRNA(Sec) biosynthesis; L-seryl-tRNA(Sec) from L-serine and tRNA(Sec): step 1/1. Functionally, catalyzes the attachment of serine to tRNA(Ser). Is also able to aminoacylate tRNA(Sec) with serine, to form the misacylated tRNA L-seryl-tRNA(Sec), which will be further converted into selenocysteinyl-tRNA(Sec). This chain is Serine--tRNA ligase, found in Stenotrophomonas maltophilia (strain R551-3).